The sequence spans 240 residues: Adenosine 5'-phosphosulfate reductase (240 aa).

[4Fe-4S] cluster is bound by residues Cys125, Cys126, Cys208, and Cys211. Cys234 (nucleophile; cysteine thiosulfonate intermediate) is an active-site residue.

It belongs to the PAPS reductase family. CysH subfamily. [4Fe-4S] cluster is required as a cofactor.

The protein resides in the cytoplasm. The enzyme catalyses [thioredoxin]-disulfide + sulfite + AMP + 2 H(+) = adenosine 5'-phosphosulfate + [thioredoxin]-dithiol. Its pathway is sulfur metabolism; hydrogen sulfide biosynthesis; sulfite from sulfate. Catalyzes the formation of sulfite from adenosine 5'-phosphosulfate (APS) using thioredoxin as an electron donor. In Oceanobacillus iheyensis (strain DSM 14371 / CIP 107618 / JCM 11309 / KCTC 3954 / HTE831), this protein is Adenosine 5'-phosphosulfate reductase.